The sequence spans 371 residues: Dead end protein homolog 1 (371 aa).

RRM domains lie at 85 to 163 (PQDI…ALDG) and 165 to 245 (PGNF…KLRS).

The protein resides in the nucleus. It localises to the cytoplasm. Functionally, RNA-binding factor that positively regulates gene expression by prohibiting miRNA-mediated gene suppression. Relieves miRNA repression in germline cells. Prohibits the function of several miRNAs by blocking the accessibility of target mRNAs. Sequence-specific RNA-binding factor that binds to U-rich regions (URRs) in the 3'untranslated region (3'-UTR) of several mRNAs. Does not bind to miRNAs. May play a role during early embryonic survival. This is Dead end protein homolog 1 (dnd1) from Xenopus laevis (African clawed frog).